Here is a 210-residue protein sequence, read N- to C-terminus: MSYAYLFKYIIIGDTGVGKSCLLLQFTDKRFQPVHDLTIGVEFGARMITIDNKPIKLQIWDTAGQESFRSITRSYYRGAAGALLVYDITRRETFNHLASWLEDARQHANANMTIMLVGNKCDLSHRRAVSYEEGEQFAKEHGLIFMEASAKTAQNVEEAFVKTAGAIYKKIQDGVFDVSNESYGIKVGYAIPGQSGGAGSSSSQGGGCCS.

Residue 13–21 (GDTGVGKSC) participates in GTP binding. The short motif at 35 to 43 (HDLTIGVEF) is the Effector region element. GTP contacts are provided by residues 61–65 (DTAGQ), 119–122 (NKCD), and 149–151 (SAK). S-geranylgeranyl cysteine attachment occurs at residues cysteine 208 and cysteine 209.

It belongs to the small GTPase superfamily. Rab family.

It is found in the endoplasmic reticulum membrane. It localises to the golgi apparatus membrane. In terms of biological role, protein transport. Probably involved in vesicular traffic. The sequence is that of Ras-related protein Rab-2-B (RAB2B) from Zea mays (Maize).